The following is a 193-amino-acid chain: Cysteine and glycine-rich protein 2 (193 aa).

Residues 10-61 form the LIM zinc-binding 1 domain; the sequence is CGACGRTVYHAEEVQCDGRTFHRCCFLCMVCRKNLDSTTVAIHDEEIYCKSC. A Nuclear localization signal motif is present at residues 64–69; the sequence is KKYGPK. Residue Lys-91 forms a Glycyl lysine isopeptide (Lys-Gly) (interchain with G-Cter in SUMO2) linkage. N6-acetyllysine occurs at positions 112 and 131. One can recognise an LIM zinc-binding 2 domain in the interval 119-170; the sequence is CSRCGDSVYAAEKIIGAGKPWHKNCFRCAKCGKSLESTTLTEKEGEIYCKGC. At Lys-137 the chain carries N6-acetyllysine; alternate. At Lys-137 the chain carries N6-succinyllysine; alternate. N6-acetyllysine is present on Lys-161.

In terms of assembly, interacts with KAT14. The LIM domain 1 is necessary and sufficient for this interaction. Interacts with GLRX3. Highly expressed in the aorta; weakly found in the kidney, thymus, and intestine. Barely detectable in brain, testis, esophagus, lung, liver, aortic adventitia, vena cava, or uterus; not present in heart and skeletal muscle.

The protein localises to the nucleus. Functionally, drastically down-regulated in response to PDGF-BB or cell injury, that promote smooth muscle cell proliferation and dedifferentiation. Seems to play a role in the development of the embryonic vascular system. This is Cysteine and glycine-rich protein 2 (Csrp2) from Rattus norvegicus (Rat).